A 224-amino-acid chain; its full sequence is Vesicle transport through interaction with t-SNAREs homolog 1A (224 aa).

At 1–199 (MSADFEGYEQ…GMLRRIIQNR (199 aa)) the chain is on the cytoplasmic side. Coiled coils occupy residues 31-92 (PDEK…KRSR) and 106-185 (DAGN…GKSS). A helical; Anchor for type IV membrane protein membrane pass occupies residues 200–220 (ILLVILGIIVVITILTAITFF). Topologically, residues 221-224 (VRGH) are vesicular.

Belongs to the VTI1 family. In terms of assembly, interacts with distinct SNARE complexes that contain either STX5 or STX6. Interacts with NAPA and, to a lesser extent, with NAPG. Identified in a complex containing STX6, STX12, VAMP4 and VTI1A. As to expression, specifically expressed in the neuronal tissues cerebellum, cortex and hippocampus. Isoform 1/VTI1A is expressed in the same neuronal tissues but also in lung, liver, kidney and spleen.

It localises to the membrane. Its subcellular location is the cytoplasmic vesicle. The protein resides in the secretory vesicle. The protein localises to the synaptic vesicle membrane. It is found in the clathrin-coated vesicle membrane. It localises to the golgi apparatus membrane. Functionally, V-SNARE that mediates vesicle transport pathways through interactions with t-SNAREs on the target membrane. These interactions are proposed to mediate aspects of the specificity of vesicle trafficking and to promote fusion of the lipid bilayers. Involved in vesicular transport from the late endosomes to the trans-Golgi network. Along with VAMP7, involved in an non-conventional RAB1-dependent traffic route to the cell surface used by KCNIP1 and KCND2. May be concerned with increased secretion of cytokines associated with cellular senescence. The sequence is that of Vesicle transport through interaction with t-SNAREs homolog 1A (Vti1a) from Rattus norvegicus (Rat).